The chain runs to 128 residues: MNTFIIFIILIPIVGFALLAVNILLAVYKPYNEKLGAFECGLTSFNQTRLAFNAAFILVAILFLPFDLEISTLLPYVMSIYLVSNYGFTIVLLFLLILIIGFVYEINTNALKINKHNKPNTDSLIYKL.

3 consecutive transmembrane segments (helical) span residues 4–24 (FIIFIILIPIVGFALLAVNIL), 50–70 (LAFNAAFILVAILFLPFDLEI), and 86–106 (YGFTIVLLFLLILIIGFVYEI).

The protein belongs to the complex I subunit 3 family. As to quaternary structure, complex I is composed of 37 different subunits.

The protein resides in the mitochondrion membrane. It carries out the reaction a ubiquinone + NADH + 5 H(+)(in) = a ubiquinol + NAD(+) + 4 H(+)(out). Functionally, core subunit of the mitochondrial membrane respiratory chain NADH dehydrogenase (Complex I) that is believed to belong to the minimal assembly required for catalysis. Complex I functions in the transfer of electrons from NADH to the respiratory chain. The immediate electron acceptor for the enzyme is believed to be ubiquinone. In Yarrowia lipolytica (strain CLIB 122 / E 150) (Yeast), this protein is NADH-ubiquinone oxidoreductase chain 3 (ND3).